A 393-amino-acid polypeptide reads, in one-letter code: NAD(P)H-quinone oxidoreductase subunit H, chloroplastic (393 aa).

It belongs to the complex I 49 kDa subunit family. NDH is composed of at least 16 different subunits, 5 of which are encoded in the nucleus.

It is found in the plastid. The protein resides in the chloroplast thylakoid membrane. It carries out the reaction a plastoquinone + NADH + (n+1) H(+)(in) = a plastoquinol + NAD(+) + n H(+)(out). The catalysed reaction is a plastoquinone + NADPH + (n+1) H(+)(in) = a plastoquinol + NADP(+) + n H(+)(out). Functionally, NDH shuttles electrons from NAD(P)H:plastoquinone, via FMN and iron-sulfur (Fe-S) centers, to quinones in the photosynthetic chain and possibly in a chloroplast respiratory chain. The immediate electron acceptor for the enzyme in this species is believed to be plastoquinone. Couples the redox reaction to proton translocation, and thus conserves the redox energy in a proton gradient. The polypeptide is NAD(P)H-quinone oxidoreductase subunit H, chloroplastic (Huperzia lucidula (Shining clubmoss)).